Consider the following 178-residue polypeptide: ATP synthase subunit delta (178 aa).

Belongs to the ATPase delta chain family. In terms of assembly, F-type ATPases have 2 components, F(1) - the catalytic core - and F(0) - the membrane proton channel. F(1) has five subunits: alpha(3), beta(3), gamma(1), delta(1), epsilon(1). F(0) has three main subunits: a(1), b(2) and c(10-14). The alpha and beta chains form an alternating ring which encloses part of the gamma chain. F(1) is attached to F(0) by a central stalk formed by the gamma and epsilon chains, while a peripheral stalk is formed by the delta and b chains.

Its subcellular location is the cell inner membrane. F(1)F(0) ATP synthase produces ATP from ADP in the presence of a proton or sodium gradient. F-type ATPases consist of two structural domains, F(1) containing the extramembraneous catalytic core and F(0) containing the membrane proton channel, linked together by a central stalk and a peripheral stalk. During catalysis, ATP synthesis in the catalytic domain of F(1) is coupled via a rotary mechanism of the central stalk subunits to proton translocation. In terms of biological role, this protein is part of the stalk that links CF(0) to CF(1). It either transmits conformational changes from CF(0) to CF(1) or is implicated in proton conduction. The sequence is that of ATP synthase subunit delta from Marinobacter nauticus (strain ATCC 700491 / DSM 11845 / VT8) (Marinobacter aquaeolei).